We begin with the raw amino-acid sequence, 180 residues long: Segregation and condensation protein B (180 aa).

This sequence belongs to the ScpB family. In terms of assembly, homodimer. Homodimerization may be required to stabilize the binding of ScpA to the Smc head domains. Component of a cohesin-like complex composed of ScpA, ScpB and the Smc homodimer, in which ScpA and ScpB bind to the head domain of Smc. The presence of the three proteins is required for the association of the complex with DNA.

The protein localises to the cytoplasm. Functionally, participates in chromosomal partition during cell division. May act via the formation of a condensin-like complex containing Smc and ScpA that pull DNA away from mid-cell into both cell halves. The sequence is that of Segregation and condensation protein B from Staphylococcus aureus (strain Mu3 / ATCC 700698).